The chain runs to 102 residues: NADH-quinone oxidoreductase subunit K (102 aa).

Helical transmembrane passes span 6–26, 30–50, and 63–83; these read LTGFMILAAGLFAAGVFGVLA, ILFQLIALEVALSGPALAFIA, and MFVLTLTLAAAEVAVGLALFL.

The protein belongs to the complex I subunit 4L family. NDH-1 is composed of 14 different subunits. Subunits NuoA, H, J, K, L, M, N constitute the membrane sector of the complex.

The protein resides in the cell inner membrane. The enzyme catalyses a quinone + NADH + 5 H(+)(in) = a quinol + NAD(+) + 4 H(+)(out). Functionally, NDH-1 shuttles electrons from NADH, via FMN and iron-sulfur (Fe-S) centers, to quinones in the respiratory chain. The immediate electron acceptor for the enzyme in this species is believed to be ubiquinone. Couples the redox reaction to proton translocation (for every two electrons transferred, four hydrogen ions are translocated across the cytoplasmic membrane), and thus conserves the redox energy in a proton gradient. The sequence is that of NADH-quinone oxidoreductase subunit K from Rhodopseudomonas palustris (strain BisA53).